The following is a 286-amino-acid chain: Aquaporin PIP1-3 (286 aa).

The residue at position 1 (Met-1) is an N-acetylmethionine. The disordered stretch occupies residues 1–33 (MEGKEEDVRVGANKFPERQPIGTSAQTDKDYKE). Topologically, residues 1–54 (MEGKEEDVRVGANKFPERQPIGTSAQTDKDYKEPPPAPFFEPGELSSWSFYRAG) are cytoplasmic. The chain crosses the membrane as a helical span at residues 55–75 (IAEFIATFLFLYITVLTVMGV). At 76 to 81 (KRAPNM) the chain is on the extracellular side. A helical transmembrane segment spans residues 82–102 (CASVGIQGIAWAFGGMIFALV). Residues 103-132 (YCTAGISGGHINPAVTFGLFLARKLSLTRA) lie on the Cytoplasmic side of the membrane. Residues 114 to 116 (NPA) carry the NPA 1 motif. Residues 133–153 (VFYIVMQCLGAICGAGVVKGF) form a helical membrane-spanning segment. The Extracellular segment spans residues 154–174 (QPNPYQTLGGGANTVAHGYTK). A helical membrane pass occupies residues 175 to 195 (GSGLGAEIIGTFVLVYTVFSA). Residues 196-208 (TDAKRSARDSHVP) are Cytoplasmic-facing. Residues 209-229 (ILAPLPIGFAVFLVHLATIPI) form a helical membrane-spanning segment. Residues 230–256 (TGTGINPARSLGAAIIYNKDHAWDDHW) are Extracellular-facing. The NPA 2 motif lies at 235–237 (NPA). A helical membrane pass occupies residues 257–277 (IFWVGPFIGAALAALYHQLVI). Topologically, residues 278–286 (RAIPFKSRS) are cytoplasmic. Ser-284 carries the post-translational modification Phosphoserine.

Belongs to the MIP/aquaporin (TC 1.A.8) family. PIP (TC 1.A.8.11) subfamily. As to expression, expressed in roots, above ground, ripening fruit, flower buds, green siliques and senescing leaves.

The protein resides in the cell membrane. Functionally, water channel required to facilitate the transport of water across cell membrane. Its function is impaired by Hg(2+). The polypeptide is Aquaporin PIP1-3 (PIP1-3) (Arabidopsis thaliana (Mouse-ear cress)).